Here is a 799-residue protein sequence, read N- to C-terminus: Leucine--tRNA ligase (799 aa).

The 'HIGH' region motif lies at 39-50 (PYPSGAGLHMGH). Residues 575 to 579 (KMSKS) carry the 'KMSKS' region motif. Position 578 (Lys-578) interacts with ATP.

This sequence belongs to the class-I aminoacyl-tRNA synthetase family.

The protein resides in the cytoplasm. It catalyses the reaction tRNA(Leu) + L-leucine + ATP = L-leucyl-tRNA(Leu) + AMP + diphosphate. The chain is Leucine--tRNA ligase from Malacoplasma penetrans (strain HF-2) (Mycoplasma penetrans).